Here is a 144-residue protein sequence, read N- to C-terminus: Large ribosomal subunit protein uL14 (144 aa).

The protein belongs to the universal ribosomal protein uL14 family. As to quaternary structure, part of the 50S ribosomal subunit. Forms a cluster with proteins L3 and L24e, part of which may contact the 16S rRNA in 2 intersubunit bridges.

Binds to 23S rRNA. Forms part of two intersubunit bridges in the 70S ribosome. In Pyrobaculum arsenaticum (strain DSM 13514 / JCM 11321 / PZ6), this protein is Large ribosomal subunit protein uL14.